A 780-amino-acid chain; its full sequence is Gelsolin (780 aa).

N-acetylmethionine; alternate is present on methionine 1. A signal peptide spans methionine 1–alanine 25. Residues valine 51–phenylalanine 174 form an actin-severing region. The Gelsolin-like 1 repeat unit spans residues phenylalanine 74–phenylalanine 155. Tyrosine 84 carries the phosphotyrosine modification. Ca(2+) is bound by residues glycine 90, aspartate 91, glutamate 122, aspartate 134, glycine 139, and alanine 141. Residues aspartate 121–glycine 124 are actin-actin interfilament contact point. Lysine 160–lysine 167 contributes to the a 1,2-diacyl-sn-glycero-3-phospho-(1D-myo-inositol-4,5-bisphosphate) binding site. Valine 170 serves as a coordination point for Ca(2+). Arginine 186 to arginine 194 is a binding site for a 1,2-diacyl-sn-glycero-3-phospho-(1D-myo-inositol-4,5-bisphosphate). The stretch at valine 196–methionine 268 is one Gelsolin-like 2 repeat. Residues glycine 211 and aspartate 212 each coordinate Ca(2+). Cysteine 213 and cysteine 226 are joined by a disulfide. Residue glutamate 234 coordinates Ca(2+). Residues glycine 244–leucine 269 are disordered. Aspartate 284, glutamate 327, aspartate 328, and glutamate 352 together coordinate Ca(2+). The stretch at aspartate 315–phenylalanine 387 is one Gelsolin-like 3 repeat. 2 positions are modified to phosphotyrosine: tyrosine 407 and tyrosine 463. The actin-binding, Ca-sensitive stretch occupies residues alanine 432–alanine 780. One copy of the Gelsolin-like 4 repeat lies at serine 453 to methionine 534. Ca(2+) contacts are provided by glycine 469, aspartate 470, glutamate 500, aspartate 512, glycine 517, proline 519, and threonine 549. The Gelsolin-like 5 repeat unit spans residues arginine 575–tryptophan 640. Lysine 582 carries the N6-acetyllysine modification. Positions 589 and 590 each coordinate Ca(2+). Tyrosine 601 carries the post-translational modification Phosphotyrosine. Residue glutamate 612 participates in Ca(2+) binding. Tyrosine 649 carries the post-translational modification Phosphotyrosine. One copy of the Gelsolin-like 6 repeat lies at isoleucine 679–phenylalanine 754. 3 residues coordinate Ca(2+): aspartate 694, aspartate 695, and glutamate 717. Position 740 is a phosphothreonine (threonine 740).

The protein belongs to the villin/gelsolin family. As to quaternary structure, binds to actin and to fibronectin. Identified in a complex composed of ACTA1, COBL, GSN and TMSB4X. Interacts with the inactive form of EIF2AK2/PKR. Interacts with FLII. Phosphorylated on tyrosine residues in vitro.

It is found in the cytoplasm. It localises to the cytoskeleton. Its subcellular location is the secreted. In terms of biological role, calcium-regulated, actin-modulating protein that binds to the plus (or barbed) ends of actin monomers or filaments, preventing monomer exchange (end-blocking or capping). It can promote the assembly of monomers into filaments (nucleation) as well as sever filaments already formed. Plays a role in ciliogenesis. The polypeptide is Gelsolin (Gsn) (Mus musculus (Mouse)).